Here is a 406-residue protein sequence, read N- to C-terminus: Leucine aminopeptidase 1 (406 aa).

The first 18 residues, 1-18 (MKVTNASLLALLLPAVSG), serve as a signal peptide directing secretion. Positions 19-94 (RFVETGEPDR…LRAMTASRKK (76 aa)) are excised as a propeptide. Asn-186 carries N-linked (GlcNAc...) asparagine glycosylation. Residues His-194, Asp-213, Glu-252, and Asp-279 each contribute to the Zn(2+) site. Asn-306 carries N-linked (GlcNAc...) asparagine glycosylation. Cys-328 and Cys-332 form a disulfide bridge. Zn(2+) is bound at residue His-361.

Belongs to the peptidase M28 family. M28E subfamily. As to quaternary structure, monomer. Zn(2+) serves as cofactor.

Its subcellular location is the secreted. Functionally, extracellular aminopeptidase that allows assimilation of proteinaceous substrates. The protein is Leucine aminopeptidase 1 (LAP1) of Chaetomium globosum (strain ATCC 6205 / CBS 148.51 / DSM 1962 / NBRC 6347 / NRRL 1970) (Soil fungus).